A 270-amino-acid chain; its full sequence is 23S rRNA (adenosine(1067)-2'-O)-methyltransferase (270 aa).

The S-adenosyl-L-methionine site is built by arginine 135, arginine 165, glycine 218, isoleucine 238, and leucine 247.

This sequence belongs to the class IV-like SAM-binding methyltransferase superfamily. RNA methyltransferase TsnR/AvirB family.

It carries out the reaction adenosine(1067) in 23S rRNA + S-adenosyl-L-methionine = 2'-O-methyladenosine(1067) in 23S rRNA + S-adenosyl-L-homocysteine + H(+). Specifically methylates the adenosine-1067 in 23S ribosomal RNA. Confers resistance to antibiotic thiostrepton. This Streptomyces laurentii protein is 23S rRNA (adenosine(1067)-2'-O)-methyltransferase.